Reading from the N-terminus, the 245-residue chain is Heat shock transcription factor (245 aa).

The DNA-binding element occupies 17-115 (KSGFVNRLYR…LISLITRDKS (99 aa)). The segment at 130–169 (SLQYLASCNYKQQKEINDLKDRIKTLETKYATLYEIISNA) is involved in trimerization.

This sequence belongs to the HSF family. Homotrimer. Homotrimerization increases the affinity of HSF1 to DNA.

The protein localises to the nucleus. Its function is as follows. DNA-binding transcription factor that specifically binds heat shock promoter elements (HSE) and activates transcription. In Enterocytozoon bieneusi (strain H348) (Microsporidian parasite), this protein is Heat shock transcription factor.